Consider the following 913-residue polypeptide: Trafficking kinesin-binding protein 2 (913 aa).

Positions 11–21 are enriched in polar residues; it reads SQTGEENLMSS. The disordered stretch occupies residues 11–31; sequence SQTGEENLMSSNHRDSESITD. Positions 48 to 353 constitute an HAP1 N-terminal domain; the sequence is EEQLPQYKLR…QEEIKELRNK (306 aa). Residues 134–355 adopt a coiled-coil conformation; it reads QALLKRNHVL…EIKELRNKAG (222 aa). The tract at residues 359 to 507 is interaction with HGS; the sequence is HLCFSQAYGV…KQFFAEEWER (149 aa). Positions 442–478 are disordered; it reads ESGVQQTEDKTLPNQGSSTEVPGNSHPRDPPGLPEDS. Residues 453–463 show a composition bias toward polar residues; it reads LPNQGSSTEVP. The stretch at 502-519 forms a coiled coil; that stretch reads AEEWERKLQILAEQEEEV. Composition is skewed to low complexity over residues 688 to 704 and 780 to 789; these read SSGF…GSAS and PSQSPCSSPV. Disordered regions lie at residues 688–707 and 769–790; these read SSGF…SNTA and ALAT…SPVP.

It belongs to the milton family. Interacts with RHOT1/Miro-1 and RHOT2/Miro-2. Interacts with GABA-A receptor and O-GlcNAc transferase. Interacts with HGS. O-glycosylated. As to expression, present in heart and brain (at protein level).

The protein localises to the cytoplasm. The protein resides in the early endosome. It is found in the mitochondrion. May regulate endosome-to-lysosome trafficking of membrane cargo, including EGFR. This chain is Trafficking kinesin-binding protein 2 (Trak2), found in Rattus norvegicus (Rat).